The primary structure comprises 64 residues: Large ribosomal subunit protein uL30 (64 aa).

The protein belongs to the universal ribosomal protein uL30 family. In terms of assembly, part of the 50S ribosomal subunit.

The protein is Large ribosomal subunit protein uL30 of Rhodopseudomonas palustris (strain BisA53).